Consider the following 234-residue polypeptide: UPF0758 protein Rfer_3252 (234 aa).

The region spanning 112-234 (IFATPDAVKH…ALSMAERGLL (123 aa)) is the MPN domain. H183, H185, and D196 together coordinate Zn(2+). Residues 183 to 196 (HNHPSGTVQPSRAD) carry the JAMM motif motif.

This sequence belongs to the UPF0758 family.

This chain is UPF0758 protein Rfer_3252, found in Albidiferax ferrireducens (strain ATCC BAA-621 / DSM 15236 / T118) (Rhodoferax ferrireducens).